Here is a 248-residue protein sequence, read N- to C-terminus: UDP-2,3-diacylglucosamine hydrolase (248 aa).

Residues aspartate 8, histidine 10, aspartate 41, asparagine 79, and histidine 114 each coordinate Mn(2+). Position 79–80 (79–80 (NR)) interacts with substrate. Positions 122, 160, 171, and 202 each coordinate substrate. Residues histidine 202 and histidine 204 each contribute to the Mn(2+) site.

This sequence belongs to the LpxH family. The cofactor is Mn(2+).

Its subcellular location is the cell inner membrane. The enzyme catalyses UDP-2-N,3-O-bis[(3R)-3-hydroxytetradecanoyl]-alpha-D-glucosamine + H2O = 2-N,3-O-bis[(3R)-3-hydroxytetradecanoyl]-alpha-D-glucosaminyl 1-phosphate + UMP + 2 H(+). It participates in glycolipid biosynthesis; lipid IV(A) biosynthesis; lipid IV(A) from (3R)-3-hydroxytetradecanoyl-[acyl-carrier-protein] and UDP-N-acetyl-alpha-D-glucosamine: step 4/6. In terms of biological role, hydrolyzes the pyrophosphate bond of UDP-2,3-diacylglucosamine to yield 2,3-diacylglucosamine 1-phosphate (lipid X) and UMP by catalyzing the attack of water at the alpha-P atom. Involved in the biosynthesis of lipid A, a phosphorylated glycolipid that anchors the lipopolysaccharide to the outer membrane of the cell. This chain is UDP-2,3-diacylglucosamine hydrolase, found in Stenotrophomonas maltophilia (strain R551-3).